Consider the following 875-residue polypeptide: Probable dipeptidyl-aminopeptidase B (875 aa).

Positions 1–90 (MSEPKPIQDT…ASSETTPPRK (90 aa)) are disordered. Residues 1–98 (MSEPKPIQDT…RKGVDRKLKK (98 aa)) lie on the Cytoplasmic side of the membrane. Over residues 19–28 (SSISSASTTS) the composition is skewed to low complexity. Basic and acidic residues predominate over residues 33–46 (RLAEESEKNHDASS). A helical; Signal-anchor for type II membrane protein transmembrane segment spans residues 99-119 (VLLIVGGFFVAAWIVSLVVFL). Residues 120–875 (TNKSYKHGSQ…VNDAKPKIES (756 aa)) are Vacuolar-facing. N-linked (GlcNAc...) asparagine glycans are attached at residues Asn354 and Asn567. The interval 689 to 715 (VDFQSSDGGRRTTRSPRRATGRPSATS) is disordered. Residues 699–708 (RTTRSPRRAT) are compositionally biased toward basic residues. The active-site Charge relay system is the Ser726. N-linked (GlcNAc...) asparagine glycosylation is present at Asn785. Residues Asp803 and His836 each act as charge relay system in the active site.

Belongs to the peptidase S9B family.

The protein localises to the vacuole membrane. The enzyme catalyses Release of an N-terminal dipeptide, Xaa-Yaa-|-Zaa-, from a polypeptide, preferentially when Yaa is Pro, provided Zaa is neither Pro nor hydroxyproline.. Type IV dipeptidyl-peptidase which removes N-terminal dipeptides sequentially from polypeptides having unsubstituted N-termini provided that the penultimate residue is proline. In Verticillium alfalfae (strain VaMs.102 / ATCC MYA-4576 / FGSC 10136) (Verticillium wilt of alfalfa), this protein is Probable dipeptidyl-aminopeptidase B (DAPB).